Consider the following 102-residue polypeptide: Fe-S protein maturation auxiliary factor YitW (102 aa).

It belongs to the MIP18 family.

In terms of biological role, involved in the maturation of iron-sulfur (Fe-S) proteins. May function as a Fe-S cluster carrier. The protein is Fe-S protein maturation auxiliary factor YitW (yitW) of Bacillus subtilis (strain 168).